An 890-amino-acid polypeptide reads, in one-letter code: Alanine--tRNA ligase (890 aa).

Zn(2+)-binding residues include His-565, His-569, Cys-677, and His-681.

This sequence belongs to the class-II aminoacyl-tRNA synthetase family. It depends on Zn(2+) as a cofactor.

Its subcellular location is the cytoplasm. The enzyme catalyses tRNA(Ala) + L-alanine + ATP = L-alanyl-tRNA(Ala) + AMP + diphosphate. Functionally, catalyzes the attachment of alanine to tRNA(Ala) in a two-step reaction: alanine is first activated by ATP to form Ala-AMP and then transferred to the acceptor end of tRNA(Ala). Also edits incorrectly charged Ser-tRNA(Ala) and Gly-tRNA(Ala) via its editing domain. The polypeptide is Alanine--tRNA ligase (Zymomonas mobilis subsp. mobilis (strain ATCC 31821 / ZM4 / CP4)).